Reading from the N-terminus, the 261-residue chain is Hemin import ATP-binding protein HmuV (261 aa).

One can recognise an ABC transporter domain in the interval 3-243 (LQAQDLSVDR…ANLRRVYGVE (241 aa)). 35 to 42 (GANGAGKS) is a binding site for ATP.

The protein belongs to the ABC transporter superfamily. Heme (hemin) importer (TC 3.A.1.14.5) family. The complex is composed of two ATP-binding proteins (HmuV), two transmembrane proteins (HmuU) and a solute-binding protein (HmuT).

It localises to the cell inner membrane. Part of the ABC transporter complex HmuTUV involved in hemin import. Responsible for energy coupling to the transport system. This chain is Hemin import ATP-binding protein HmuV, found in Bordetella avium (strain 197N).